The sequence spans 866 residues: Translation initiation factor IF-2 (866 aa).

Disordered regions lie at residues 1-63 and 92-257; these read MTND…AAVQ and VVRA…RGRS. The span at 26–36 shows a compositional bias: polar residues; sequence ETGQVRQSFSH. A compositionally biased stretch (basic and acidic residues) spans 92–135; the sequence is VVRAAEEAERKRLEEIERRRREEEEARLKVEEEARRKAEEEAAR. 2 stretches are compositionally biased toward low complexity: residues 152-164 and 179-197; these read VAPAAPQVAAAPQ and PDASARPAAEAPRSPTEAP. A tr-type G domain is found at 365 to 533; the sequence is SRPPVVTVMG…AILLQSEILD (169 aa). Positions 374–381 are G1; that stretch reads GHVDHGKT. GTP is bound at residue 374 to 381; sequence GHVDHGKT. Residues 399-403 form a G2 region; the sequence is GITQH. Residues 421–424 form a G3 region; the sequence is DTPG. GTP-binding positions include 421 to 425 and 475 to 478; these read DTPGH and NKMD. The tract at residues 475 to 478 is G4; it reads NKMD. The segment at 511-513 is G5; it reads SAK.

The protein belongs to the TRAFAC class translation factor GTPase superfamily. Classic translation factor GTPase family. IF-2 subfamily.

Its subcellular location is the cytoplasm. Its function is as follows. One of the essential components for the initiation of protein synthesis. Protects formylmethionyl-tRNA from spontaneous hydrolysis and promotes its binding to the 30S ribosomal subunits. Also involved in the hydrolysis of GTP during the formation of the 70S ribosomal complex. In Rhodospirillum rubrum (strain ATCC 11170 / ATH 1.1.1 / DSM 467 / LMG 4362 / NCIMB 8255 / S1), this protein is Translation initiation factor IF-2.